The following is a 635-amino-acid chain: Threonine--tRNA ligase (635 aa).

Residues 1–61 (MVSIRLPDGS…DHDVALAIVT (61 aa)) form the TGS domain. The tract at residues 242-533 (DHRKLGKQLD…LIEHHAGAMP (292 aa)) is catalytic. Zn(2+)-binding residues include cysteine 333, histidine 384, and histidine 510.

Belongs to the class-II aminoacyl-tRNA synthetase family. As to quaternary structure, homodimer. Zn(2+) is required as a cofactor.

Its subcellular location is the cytoplasm. It carries out the reaction tRNA(Thr) + L-threonine + ATP = L-threonyl-tRNA(Thr) + AMP + diphosphate + H(+). Its function is as follows. Catalyzes the attachment of threonine to tRNA(Thr) in a two-step reaction: L-threonine is first activated by ATP to form Thr-AMP and then transferred to the acceptor end of tRNA(Thr). Also edits incorrectly charged L-seryl-tRNA(Thr). In Paraburkholderia phytofirmans (strain DSM 17436 / LMG 22146 / PsJN) (Burkholderia phytofirmans), this protein is Threonine--tRNA ligase.